The following is a 248-amino-acid chain: DNA polymerase sliding clamp 2 (248 aa).

The protein belongs to the PCNA family. As to quaternary structure, the subunits circularize to form a toroid; DNA passes through its center. Replication factor C (RFC) is required to load the toroid on the DNA. Forms a dimeric complex with PCNA3 and trimeric complexes PCNA123 and PCNA323; does not form homotrimers. Crystal structures show a heterotetramer of 2 PCNA2 and 2 PCNA3, which would be large enough to clamp a Holliday junction.

Sliding clamp subunit that acts as a moving platform for DNA processing. Responsible for tethering the catalytic subunit of DNA polymerase and other proteins to DNA during high-speed replication. Both trimeric complexes inhibit DNA ligase and both 3'-5' and 5'-3' activity of Hel308 (Hjm) helicase, but stimulate Hjc, the Holliday junction cleavage enzyme. The protein is DNA polymerase sliding clamp 2 of Sulfurisphaera tokodaii (strain DSM 16993 / JCM 10545 / NBRC 100140 / 7) (Sulfolobus tokodaii).